A 672-amino-acid chain; its full sequence is MESRKLISATDIQYSGSLLNSLNEQRGHGLFCDVTVIVEDRKFRAHKNILSASSTYFHQLFSVAGQVVELSFIRAEIFAEILNYIYSSKIVRVRSDLLDELIKSGQLLGVKFIAELGVPLSQVKSISGTAQDGNTEPLPPDSGDKNLVIQKSKDEAQDNGATIMPIITESFSLSAEDYEMKKIIVTDSDDDDDDVIFCSEILPTKETLPSNNTVAQVQSNPGPVAISDVAPSASNNSPPLTNITPTQKLPTPVNQATLSQTQGSEKLLVSSAPTHLTPNIILLNQTPLSTPPNVSSSLPNHMPSSINLLVQNQQTPNSAILTGNKANEEEEEEIIDDDDDTISSSPDSAVSNTSLVPQADTSQNTSFDGSLIQKMQIPTLLQEPLSNSLKISDIITRNTNDPGVGSKHLMEGQKIITLDTATEIEGLSTGCKVYANIGEDTYDIVIPVKDDPDEGEARLENEIPKTSGSEMANKRMKVKHDDHYELIVDGRVYYICIVCKRSYVCLTSLRRHFNIHSWEKKYPCRYCEKVFPLAEYRTKHEIHHTGERRYQCLACGKSFINYQFMSSHIKSVHSQDPSGDSKLYRLHPCRSLQIRQYAYLSDRSSTIPAMKDDGIGYKVDTGKEPPVGTTTSTQNKPMTWEDIFIQQENDSIFKQNVTDGSTEFEFIIPESY.

The tract at residues 1–103 is interaction with NCOR1; sequence MESRKLISAT…RSDLLDELIK (103 aa). The self-association stretch occupies residues 1–136; the sequence is MESRKLISAT…SGTAQDGNTE (136 aa). One can recognise a BTB domain in the interval 32-94; the sequence is CDVTVIVEDR…IYSSKIVRVR (63 aa). Residues lysine 151 and lysine 153 each participate in a glycyl lysine isopeptide (Lys-Gly) (interchain with G-Cter in SUMO2) cross-link. Position 251 is a phosphothreonine (threonine 251). The segment at 298–573 is interaction with CBFA2T3; sequence LPNHMPSSIN…FMSSHIKSVH (276 aa). The tract at residues 325-354 is disordered; the sequence is KANEEEEEEIIDDDDDTISSSPDSAVSNTS. A compositionally biased stretch (acidic residues) spans 328–341; sequence EEEEEEIIDDDDDT. Glycyl lysine isopeptide (Lys-Gly) (interchain with G-Cter in SUMO2) cross-links involve residues lysine 390, lysine 407, lysine 414, lysine 449, lysine 465, lysine 474, and lysine 479. The segment at 454–672 is interaction with CTNND1; the sequence is EGEARLENEI…EFEFIIPESY (219 aa). The Nuclear localization signal signature appears at 471–480; the sequence is MANKRMKVKH. 3 C2H2-type zinc fingers span residues 494–516, 522–544, and 550–573; these read YICI…FNIH, YPCR…EIHH, and YQCL…KSVH. Residues 514–638 are required for DNA-binding; it reads NIHSWEKKYP…TTTSTQNKPM (125 aa). Residues lysine 539, lysine 570, lysine 582, lysine 611, and lysine 618 each participate in a glycyl lysine isopeptide (Lys-Gly) (interchain with G-Cter in SUMO2) cross-link. Residues 616-635 form a disordered region; that stretch reads GYKVDTGKEPPVGTTTSTQN.

As to quaternary structure, self-associates. Interacts with CTNND2. Interacts with CTNND1, and this interaction inhibits binding to both methylated and non-methylated DNA. Interacts with NCOR1. Interacts with KPNA2/RCH1, which may mediate nuclear import of this protein. Interacts with CBFA2T3. In terms of tissue distribution, expressed in vascular endothelium.

The protein localises to the nucleus. It localises to the cytoplasm. Functionally, transcriptional regulator with bimodal DNA-binding specificity. Binds to methylated CpG dinucleotides in the consensus sequence 5'-CGCG-3' and also binds to the non-methylated consensus sequence 5'-CTGCNA-3' also known as the consensus kaiso binding site (KBS). Recruits the N-CoR repressor complex to promote histone deacetylation and the formation of repressive chromatin structures in target gene promoters. May contribute to the repression of target genes of the Wnt signaling pathway. May also activate transcription of a subset of target genes by the recruitment of CTNND2. Represses expression of MMP7 in conjunction with transcriptional corepressors CBFA2T3, CBFA2T2 and RUNX1T1. The protein is Transcriptional regulator Kaiso (ZBTB33) of Homo sapiens (Human).